A 95-amino-acid polypeptide reads, in one-letter code: Aspartyl/glutamyl-tRNA(Asn/Gln) amidotransferase subunit C (95 aa).

Belongs to the GatC family. In terms of assembly, heterotrimer of A, B and C subunits.

It catalyses the reaction L-glutamyl-tRNA(Gln) + L-glutamine + ATP + H2O = L-glutaminyl-tRNA(Gln) + L-glutamate + ADP + phosphate + H(+). The catalysed reaction is L-aspartyl-tRNA(Asn) + L-glutamine + ATP + H2O = L-asparaginyl-tRNA(Asn) + L-glutamate + ADP + phosphate + 2 H(+). Functionally, allows the formation of correctly charged Asn-tRNA(Asn) or Gln-tRNA(Gln) through the transamidation of misacylated Asp-tRNA(Asn) or Glu-tRNA(Gln) in organisms which lack either or both of asparaginyl-tRNA or glutaminyl-tRNA synthetases. The reaction takes place in the presence of glutamine and ATP through an activated phospho-Asp-tRNA(Asn) or phospho-Glu-tRNA(Gln). The sequence is that of Aspartyl/glutamyl-tRNA(Asn/Gln) amidotransferase subunit C from Chromohalobacter salexigens (strain ATCC BAA-138 / DSM 3043 / CIP 106854 / NCIMB 13768 / 1H11).